The sequence spans 473 residues: Calcium/calmodulin-dependent protein kinase type IV (473 aa).

A phosphoserine; by autocatalysis mark is found at S12 and S13. One can recognise a Protein kinase domain in the interval 46-300; it reads FEVESELGRG…TFQALQHPWV (255 aa). Residues 52–60 and K75 each bind ATP; that span reads LGRGATSIV. T57 carries O-linked (GlcNAc) threonine glycosylation. Residue S58 is glycosylated (O-linked (GlcNAc) serine). A glycan (O-linked (GlcNAc) serine) is linked at S137. The Proton acceptor role is filled by D164. An O-linked (GlcNAc) serine glycan is attached at S189. Position 200 is a phosphothreonine; by CaMKK1 and CaMKK2 (T200). Residues 305–321 form an autoinhibitory domain region; it reads ANFVHMDTAQKKLQEFN. The interval 306–323 is PP2A-binding; it reads NFVHMDTAQKKLQEFNAR. Residues 322-341 are calmodulin-binding; the sequence is ARRKLKAAVKAVVASSRLGS. S336 bears the Phosphoserine; by autocatalysis mark. Residue S341 is modified to Phosphoserine. Low complexity predominate over residues 341-350; that stretch reads SASSSHGSIQ. 2 disordered regions span residues 341-368 and 445-473; these read SASSSHGSIQESHKASRDPSPIQDGNED and EEAAAPREGQGSSAVGFEVPQQDVILPEY. O-linked (GlcNAc) serine glycans are attached at residues S344, S345, and S356. S360 is subject to Phosphoserine.

The protein belongs to the protein kinase superfamily. CAMK Ser/Thr protein kinase family. CaMK subfamily. As to quaternary structure, monomer. Interacts with protein phosphatase 2A (PPP2CA/PPP2CB); the interaction is mutually exclusive with binding to Ca(2+)/calmodulin. Post-translationally, phosphorylated by CaMKK1 and CaMKK2 on Thr-200. Dephosphorylated by protein phosphatase 2A. Autophosphorylated on Ser-12 and Ser-13. In terms of processing, glycosylation at Ser-189 modulates the phosphorylation of CaMK4 at Thr-200 and negatively regulates its activity toward CREB1 in basal conditions and during early inomycin stimulation. As to expression, expressed in brain, thymus, CD4 T-cells, testis and epithelial ovarian cancer tissue.

The protein resides in the cytoplasm. It localises to the nucleus. It catalyses the reaction L-seryl-[protein] + ATP = O-phospho-L-seryl-[protein] + ADP + H(+). The catalysed reaction is L-threonyl-[protein] + ATP = O-phospho-L-threonyl-[protein] + ADP + H(+). Activated by Ca(2+)/calmodulin. Binding of calmodulin results in conformational change that relieves intrasteric autoinhibition and allows phosphorylation of Thr-200 within the activation loop by CaMKK1 or CaMKK2. Phosphorylation of Thr-200 results in a 10-20-fold increase in total activity to generate Ca(2+)/calmodulin-independent activity. Autophosphorylation of the N-terminus Ser-12 and Ser-13 is required for full activation. Inactivated by protein phosphatase 2A (PPP2CA/PPP2CB) which dephosphorylates Thr-200, thereby terminating autonomous activity and helping to maintain the enzyme in its autoinhibited state. Calcium/calmodulin-dependent protein kinase that operates in the calcium-triggered CaMKK-CaMK4 signaling cascade and regulates, mainly by phosphorylation, the activity of several transcription activators, such as CREB1, MEF2D, JUN and RORA, which play pivotal roles in immune response, inflammation, and memory consolidation. In the thymus, regulates the CD4(+)/CD8(+) double positive thymocytes selection threshold during T-cell ontogeny. In CD4 memory T-cells, is required to link T-cell antigen receptor (TCR) signaling to the production of IL2, IFNG and IL4 (through the regulation of CREB and MEF2). Regulates the differentiation and survival phases of osteoclasts and dendritic cells (DCs). Mediates DCs survival by linking TLR4 and the regulation of temporal expression of BCL2. Phosphorylates the transcription activator CREB1 on 'Ser-133' in hippocampal neuron nuclei and contribute to memory consolidation and long term potentiation (LTP) in the hippocampus. Can activate the MAP kinases MAPK1/ERK2, MAPK8/JNK1 and MAPK14/p38 and stimulate transcription through the phosphorylation of ELK1 and ATF2. Can also phosphorylate in vitro CREBBP, PRM2, MEF2A and STMN1/OP18. The sequence is that of Calcium/calmodulin-dependent protein kinase type IV (CAMK4) from Homo sapiens (Human).